Consider the following 453-residue polypeptide: Na(+)/H(+) antiporter NhaA (453 aa).

Helical transmembrane passes span 22–42, 72–92, 108–128, 137–157, 166–186, 189–209, 218–238, 316–336, 343–363, 386–406, and 424–444; these read ASLLLFAATIVAMVLANSPWA, MLAFVNDALMAVFFFVIGLEI, LLPIIAACGGMIVPVLFYMLV, GAAIPMATDIAFALAVLGLLG, IFLTALAVVDDIGGIIIIALF, GHIAFEPLLISLIVLALLYVG, LFFYIGGFIVWLLFLESGIHP, PLVNYVILPLFAFVNAGVTFG, LVNVPLAVFVGLFVGKTLGIF, LFGVSMLGGIGFTVALFIANL, and LGVFTGSFISGLCGYLVLKWV.

This sequence belongs to the NhaA Na(+)/H(+) (TC 2.A.33) antiporter family.

The protein resides in the cell inner membrane. The catalysed reaction is Na(+)(in) + 2 H(+)(out) = Na(+)(out) + 2 H(+)(in). Its function is as follows. Na(+)/H(+) antiporter that extrudes sodium in exchange for external protons. The sequence is that of Na(+)/H(+) antiporter NhaA from Parabacteroides distasonis (strain ATCC 8503 / DSM 20701 / CIP 104284 / JCM 5825 / NCTC 11152).